The sequence spans 292 residues: MTVDRAPRITDGDTRLSFGSNLSSFSEYLRVHAPEHLPQNRFADTGGVVMGGGDVAPHGTTIVAISYAGGVLLAGDRRATMGNLIASRDVQKVYVTDDYSAAGIAGTAGIAIELVRLFAVELEHYEKIEGVPLTFDGKANRLSSMVRGNLGAAMQGLAVVPLLVGYDLDAVDPSRAGRIVSYDVVGGRYEERAGYHAVGSGSLFAKSALKKLYSPGIDEDTALRFAVEALYDAADDDSATGGPDLTRGIYPTAVTITSAGAVELSTAKAAEIAREIVAARTATASPEGESAL.

A propeptide spans 1–59 (removed in mature form; by autocatalysis); it reads MTVDRAPRITDGDTRLSFGSNLSSFSEYLRVHAPEHLPQNRFADTGGVVMGGGDVAPHG. The Nucleophile role is filled by Thr-60.

It belongs to the peptidase T1B family. As to quaternary structure, the 20S proteasome core is composed of 14 alpha and 14 beta subunits that assemble into four stacked heptameric rings, resulting in a barrel-shaped structure. The two inner rings, each composed of seven catalytic beta subunits, are sandwiched by two outer rings, each composed of seven alpha subunits. All four combinations of alpha- and beta-subunits (beta2-alpha1, beta2-alpha2, beta1-alpha2 and beta1-alpha1) yield fully assembled and proteolytically active proteasomes. The catalytic chamber with the active sites is on the inside of the barrel. Has probably a gated structure, the ends of the cylinder being occluded by the N-termini of the alpha-subunits. Is likely capped by the proteasome-associated ATPase, ARC.

It localises to the cytoplasm. The catalysed reaction is Cleavage of peptide bonds with very broad specificity.. Its pathway is protein degradation; proteasomal Pup-dependent pathway. With respect to regulation, the formation of the proteasomal ATPase ARC-20S proteasome complex, likely via the docking of the C-termini of ARC into the intersubunit pockets in the alpha-rings, may trigger opening of the gate for substrate entry. Interconversion between the open-gate and close-gate conformations leads to a dynamic regulation of the 20S proteasome proteolysis activity. Component of the proteasome core, a large protease complex with broad specificity involved in protein degradation. The R.erythropolis proteasomes are able to cleave oligopeptides after Tyr, Phe and Leu, very poorly after Arg but not after Glu. Thus, displays chymotrypsin-like activity, low trypsin-like activity but no caspase-like activity. This is Proteasome subunit beta 2 from Rhodococcus erythropolis (Arthrobacter picolinophilus).